Reading from the N-terminus, the 514-residue chain is 2-isopropylmalate synthase (514 aa).

A Pyruvate carboxyltransferase domain is found at 5-268 (LIIFDTTLRD…DVGIDTSQIV (264 aa)). Positions 14, 202, 204, and 239 each coordinate Mn(2+). A regulatory domain region spans residues 395–514 (KFVSLSQHSE…KDDKVNPQRS (120 aa)).

Belongs to the alpha-IPM synthase/homocitrate synthase family. LeuA type 1 subfamily. As to quaternary structure, homodimer. The cofactor is Mn(2+).

It is found in the cytoplasm. The enzyme catalyses 3-methyl-2-oxobutanoate + acetyl-CoA + H2O = (2S)-2-isopropylmalate + CoA + H(+). It functions in the pathway amino-acid biosynthesis; L-leucine biosynthesis; L-leucine from 3-methyl-2-oxobutanoate: step 1/4. Functionally, catalyzes the condensation of the acetyl group of acetyl-CoA with 3-methyl-2-oxobutanoate (2-ketoisovalerate) to form 3-carboxy-3-hydroxy-4-methylpentanoate (2-isopropylmalate). The polypeptide is 2-isopropylmalate synthase (Burkholderia lata (strain ATCC 17760 / DSM 23089 / LMG 22485 / NCIMB 9086 / R18194 / 383)).